The following is a 521-amino-acid chain: Probable protein kinase UbiB (521 aa).

The 379-residue stretch at Gln119–Thr497 folds into the Protein kinase domain. ATP is bound by residues Ile125 to Val133 and Lys151. The Proton acceptor role is filled by Asp286. The helical transmembrane segment at Gln496 to Val516 threads the bilayer.

Belongs to the ABC1 family. UbiB subfamily.

The protein localises to the cell inner membrane. Its pathway is cofactor biosynthesis; ubiquinone biosynthesis [regulation]. Functionally, is probably a protein kinase regulator of UbiI activity which is involved in aerobic coenzyme Q (ubiquinone) biosynthesis. The sequence is that of Probable protein kinase UbiB from Variovorax paradoxus (strain S110).